A 439-amino-acid chain; its full sequence is Chitinase-like protein Idgf1 (439 aa).

The first 20 residues, 1–20, serve as a signal peptide directing secretion; it reads MRFQLCYLLGLLSVTSLSHA. The GH18 domain occupies 22-439; that stretch reads SNLICYYDST…IVRSIKYFMG (418 aa). A disulfide bond links Cys-26 and Cys-53. Residues Asn-122, Asn-218, and Asn-346 are each glycosylated (N-linked (GlcNAc...) asparagine). A disulfide bond links Cys-340 and Cys-423.

This sequence belongs to the glycosyl hydrolase 18 family. IDGF subfamily. Glycosylated.

It is found in the secreted. Functionally, cooperates with insulin-like peptides to stimulate the proliferation, polarization and motility of imaginal disk cells. May act by stabilizing the binding of insulin-like peptides to its receptor through a simultaneous interaction with both molecules to form a multiprotein signaling complex. The sequence is that of Chitinase-like protein Idgf1 (Idgf1) from Drosophila yakuba (Fruit fly).